The following is a 197-amino-acid chain: Adenylate kinase (197 aa).

Residue 12-17 (GSGKTT) coordinates ATP. The interval 34–63 (STGDMLREEVASGSELGKTIESYIAKGALV) is NMP. AMP-binding positions include Thr35, Arg40, 61–63 (ALV), 88–91 (GYPR), and Gln95. Residues 130–144 (GRRAEAAPGEERSDD) form an LID region. Arg131 contacts ATP. Residues Arg141 and Arg152 each coordinate AMP. Residue Arg180 participates in ATP binding.

Belongs to the adenylate kinase family. Monomer.

Its subcellular location is the cytoplasm. It catalyses the reaction AMP + ATP = 2 ADP. The protein operates within purine metabolism; AMP biosynthesis via salvage pathway; AMP from ADP: step 1/1. Catalyzes the reversible transfer of the terminal phosphate group between ATP and AMP. Plays an important role in cellular energy homeostasis and in adenine nucleotide metabolism. The sequence is that of Adenylate kinase from Sulfurovum sp. (strain NBC37-1).